The chain runs to 510 residues: D-alanine--D-alanyl carrier protein ligase (510 aa).

Residue 157–158 (TS) coordinates ATP. Asp202 is a D-alanine binding site. 297–302 (NTYGPT) lines the ATP pocket. Val306 contacts D-alanine. ATP is bound by residues Asp389 and Lys498. Residue Lys498 participates in D-alanine binding.

Belongs to the ATP-dependent AMP-binding enzyme family. DltA subfamily.

The protein localises to the cytoplasm. The catalysed reaction is holo-[D-alanyl-carrier protein] + D-alanine + ATP = D-alanyl-[D-alanyl-carrier protein] + AMP + diphosphate. Its pathway is cell wall biogenesis; lipoteichoic acid biosynthesis. Functionally, catalyzes the first step in the D-alanylation of lipoteichoic acid (LTA), the activation of D-alanine and its transfer onto the D-alanyl carrier protein (Dcp) DltC. In an ATP-dependent two-step reaction, forms a high energy D-alanyl-AMP intermediate, followed by transfer of the D-alanyl residue as a thiol ester to the phosphopantheinyl prosthetic group of the Dcp. D-alanylation of LTA plays an important role in modulating the properties of the cell wall in Gram-positive bacteria, influencing the net charge of the cell wall. This Listeria monocytogenes serotype 4b (strain F2365) protein is D-alanine--D-alanyl carrier protein ligase.